A 295-amino-acid polypeptide reads, in one-letter code: Protoheme IX farnesyltransferase (295 aa).

A run of 7 helical transmembrane segments spans residues 43 to 63 (PIQLALLVLGTSAAAGGVAAL), 92 to 112 (SAFVLGVLMCIGSLFLLYALV), 114 to 134 (PLAALFTLLTIFSYLGWYTPA), 140 to 160 (WSTEIGAVAGAFPPLIGWSAG), 166 to 186 (ALGWVLFGVLFFWQVPHFMAV), 231 to 251 (LLWGLTTWFYGVAAAVTGLWF), and 272 to 292 (FFASIGYLPLVLGALVIDRLF).

This sequence belongs to the UbiA prenyltransferase family. Protoheme IX farnesyltransferase subfamily.

The protein resides in the cell inner membrane. It carries out the reaction heme b + (2E,6E)-farnesyl diphosphate + H2O = Fe(II)-heme o + diphosphate. It participates in porphyrin-containing compound metabolism; heme O biosynthesis; heme O from protoheme: step 1/1. Converts heme B (protoheme IX) to heme O by substitution of the vinyl group on carbon 2 of heme B porphyrin ring with a hydroxyethyl farnesyl side group. The chain is Protoheme IX farnesyltransferase from Opitutus terrae (strain DSM 11246 / JCM 15787 / PB90-1).